A 118-amino-acid chain; its full sequence is Developmental pluripotency-associated protein 5A (118 aa).

One can recognise a KH; atypical domain in the interval 24-86 (PEVFQVQSLV…NNKIRAKWML (63 aa)).

It belongs to the KHDC1 family.

It is found in the cytoplasm. Functionally, involved in the maintenance of embryonic stem (ES) cell pluripotency. Dispensable for self-renewal of pluripotent ES cells and establishment of germ cells. Associates with specific target mRNAs. The chain is Developmental pluripotency-associated protein 5A (Dppa5a) from Mus musculus (Mouse).